We begin with the raw amino-acid sequence, 493 residues long: Probable NADPH:adrenodoxin oxidoreductase, mitochondrial (493 aa).

FAD contacts are provided by S26, E48, L56, and I100. NADP(+) is bound by residues 177 to 180, 223 to 224, and E235; these read NGNV and RR. FAD is bound by residues W407 and 414-416; that span reads GVI. G414 contacts NADP(+).

This sequence belongs to the ferredoxin--NADP reductase type 1 family. FAD is required as a cofactor.

The protein localises to the mitochondrion inner membrane. It carries out the reaction 2 reduced [adrenodoxin] + NADP(+) + H(+) = 2 oxidized [adrenodoxin] + NADPH. Functionally, adrenodoxin reductase transfers electrons from NADPH to adrenodoxin, which is involved in heme A biosynthesis and in iron-sulfur cluster assembly. Involved in the electron transfer to heme A synthase COX15, a heme protein that catalyzes the conversion of heme O to heme A. Required for the de novo synthesis of Fe-S clusters on iron sulfur cluster assembly protein ISU1. Involved in electron delivery for Fe-S cluster synthesis. Essential for coenzyme Q biosynthesis. May be involved in the electron transfer required for the hydroxylation reaction performed by COQ6. May play a role in cellular and mitochondrial iron homeostasis. The polypeptide is Probable NADPH:adrenodoxin oxidoreductase, mitochondrial (Saccharomyces cerevisiae (strain ATCC 204508 / S288c) (Baker's yeast)).